We begin with the raw amino-acid sequence, 82 residues long: uncharacterized protein (82 aa).

This is an uncharacterized protein from Methanocaldococcus jannaschii (strain ATCC 43067 / DSM 2661 / JAL-1 / JCM 10045 / NBRC 100440) (Methanococcus jannaschii).